The sequence spans 450 residues: tRNA modification GTPase MnmE (450 aa).

(6S)-5-formyl-5,6,7,8-tetrahydrofolate contacts are provided by Arg-23, Glu-79, and Lys-118. Residues 214–374 (GITLILVGKP…LKDHILAKVG (161 aa)) form the TrmE-type G domain. K(+) is bound at residue Asn-224. Residues 224 to 229 (NAGKSS), 243 to 249 (TSIAGTT), and 268 to 271 (DTAG) each bind GTP. Ser-228 is a binding site for Mg(2+). Thr-243, Ile-245, and Thr-248 together coordinate K(+). Position 249 (Thr-249) interacts with Mg(2+). (6S)-5-formyl-5,6,7,8-tetrahydrofolate is bound at residue Lys-450.

Belongs to the TRAFAC class TrmE-Era-EngA-EngB-Septin-like GTPase superfamily. TrmE GTPase family. Homodimer. Heterotetramer of two MnmE and two MnmG subunits. Requires K(+) as cofactor.

It is found in the cytoplasm. Its function is as follows. Exhibits a very high intrinsic GTPase hydrolysis rate. Involved in the addition of a carboxymethylaminomethyl (cmnm) group at the wobble position (U34) of certain tRNAs, forming tRNA-cmnm(5)s(2)U34. This Francisella philomiragia subsp. philomiragia (strain ATCC 25017 / CCUG 19701 / FSC 153 / O#319-036) protein is tRNA modification GTPase MnmE.